Consider the following 185-residue polypeptide: Ribosome-recycling factor (185 aa).

This sequence belongs to the RRF family.

The protein localises to the cytoplasm. Responsible for the release of ribosomes from messenger RNA at the termination of protein biosynthesis. May increase the efficiency of translation by recycling ribosomes from one round of translation to another. This is Ribosome-recycling factor from Pseudomonas syringae pv. tomato (strain ATCC BAA-871 / DC3000).